The primary structure comprises 740 residues: Ribosomal protein S6 kinase alpha-3 (740 aa).

Residues 1 to 26 (MPLAQLADPWQKMAVESPSDSAENGQ) are disordered. The 260-residue stretch at 68-327 (FELLKVLGQG…VEEIKRHSFF (260 aa)) folds into the Protein kinase 1 domain. Residues 74–82 (LGQGSFGKV) and lysine 100 contribute to the ATP site. Catalysis depends on aspartate 193, which acts as the Proton acceptor. Serine 227 is modified (phosphoserine; by PDPK1). The AGC-kinase C-terminal domain occupies 328-397 (STIDWNKLYR…VAITSDDESQ (70 aa)). Threonine 365 is subject to Phosphothreonine. Serine 369 and serine 375 each carry phosphoserine. Phosphoserine; by autocatalysis and MAPKAPK2 is present on serine 386. The residue at position 415 (serine 415) is a Phosphoserine. Positions 422–679 (YEVKEDIGVG…AALVLRHPWI (258 aa)) constitute a Protein kinase 2 domain. Residues 428–436 (IGVGSYSVC) and lysine 451 each bind ATP. At tyrosine 529 the chain carries Phosphotyrosine; by FGFR3. Aspartate 539 serves as the catalytic Proton acceptor. Serine 556 and serine 715 each carry phosphoserine.

The protein belongs to the protein kinase superfamily. AGC Ser/Thr protein kinase family. S6 kinase subfamily. As to quaternary structure, forms a complex with either MAPK1/ERK2 or MAPK3/ERK1 in quiescent cells. Transiently dissociates following mitogenic stimulation. Interacts with NFATC4, ETV1/ER81 and FGFR1. The cofactor is Mg(2+). Post-translationally, activated by phosphorylation at Ser-227 by PDPK1. Autophosphorylated on Ser-386, as part of the activation process. May be phosphorylated at Thr-365 and Ser-369 by MAPK1/ERK2 and MAPK3/ERK1. Can also be activated via phosphorylation at Ser-386 by MAPKAPK2. In terms of processing, N-terminal myristoylation results in an activated kinase in the absence of added growth factors. In terms of tissue distribution, intestine, thymus, lung, heart and brain.

The protein resides in the nucleus. The protein localises to the cytoplasm. The catalysed reaction is L-seryl-[protein] + ATP = O-phospho-L-seryl-[protein] + ADP + H(+). It catalyses the reaction L-threonyl-[protein] + ATP = O-phospho-L-threonyl-[protein] + ADP + H(+). With respect to regulation, upon extracellular signal or mitogen stimulation, phosphorylated at Thr-577 in the C-terminal kinase domain (CTKD) by MAPK1/ERK2 and MAPK3/ERK1. The activated CTKD then autophosphorylates Ser-386, allowing binding of PDPK1, which in turn phosphorylates Ser-227 in the N-terminal kinase domain (NTDK) leading to the full activation of the protein and subsequent phosphorylation of the substrates by the NTKD. Its function is as follows. Serine/threonine-protein kinase that acts downstream of ERK (MAPK1/ERK2 and MAPK3/ERK1) signaling and mediates mitogenic and stress-induced activation of the transcription factors CREB1, ETV1/ER81 and NR4A1/NUR77, regulates translation through RPS6 and EIF4B phosphorylation, and mediates cellular proliferation, survival, and differentiation by modulating mTOR signaling and repressing pro-apoptotic function of BAD and DAPK1. In fibroblast, is required for EGF-stimulated phosphorylation of CREB1 and histone H3 at 'Ser-10', which results in the subsequent transcriptional activation of several immediate-early genes. In response to mitogenic stimulation (EGF and PMA), phosphorylates and activates NR4A1/NUR77 and ETV1/ER81 transcription factors and the cofactor CREBBP. Upon insulin-derived signal, acts indirectly on the transcription regulation of several genes by phosphorylating GSK3B at 'Ser-9' and inhibiting its activity. Phosphorylates RPS6 in response to serum or EGF via an mTOR-independent mechanism and promotes translation initiation by facilitating assembly of the preinitiation complex. In response to insulin, phosphorylates EIF4B, enhancing EIF4B affinity for the EIF3 complex and stimulating cap-dependent translation. Is involved in the mTOR nutrient-sensing pathway by directly phosphorylating TSC2 at 'Ser-1798', which potently inhibits TSC2 ability to suppress mTOR signaling, and mediates phosphorylation of RPTOR, which regulates mTORC1 activity and may promote rapamycin-sensitive signaling independently of the PI3K/AKT pathway. Mediates cell survival by phosphorylating the pro-apoptotic proteins BAD and DAPK1 and suppressing their pro-apoptotic function. Promotes the survival of hepatic stellate cells by phosphorylating CEBPB in response to the hepatotoxin carbon tetrachloride (CCl4). Is involved in cell cycle regulation by phosphorylating the CDK inhibitor CDKN1B, which promotes CDKN1B association with 14-3-3 proteins and prevents its translocation to the nucleus and inhibition of G1 progression. In LPS-stimulated dendritic cells, is involved in TLR4-induced macropinocytosis, and in myeloma cells, acts as effector of FGFR3-mediated transformation signaling, after direct phosphorylation at Tyr-529 by FGFR3. Negatively regulates EGF-induced MAPK1/3 phosphorylation via phosphorylation of SOS1. Phosphorylates SOS1 at 'Ser-1134' and 'Ser-1161' that create YWHAB and YWHAE binding sites and which contribute to the negative regulation of MAPK1/3 phosphorylation. Phosphorylates EPHA2 at 'Ser-897', the RPS6KA-EPHA2 signaling pathway controls cell migration. Acts as a regulator of osteoblast differentiation by mediating phosphorylation of ATF4, thereby promoting ATF4 transactivation activity. This Mus musculus (Mouse) protein is Ribosomal protein S6 kinase alpha-3 (Rps6ka3).